The sequence spans 463 residues: Argininosuccinate lyase (463 aa).

It belongs to the lyase 1 family. Argininosuccinate lyase subfamily.

Its subcellular location is the cytoplasm. The catalysed reaction is 2-(N(omega)-L-arginino)succinate = fumarate + L-arginine. It functions in the pathway amino-acid biosynthesis; L-arginine biosynthesis; L-arginine from L-ornithine and carbamoyl phosphate: step 3/3. This chain is Argininosuccinate lyase, found in Bradyrhizobium sp. (strain ORS 278).